The chain runs to 1010 residues: Translation initiation factor IF-2 (1010 aa).

Disordered regions lie at residues 54–350 (KGLA…FEDD) and 364–420 (PSFT…RPES). Positions 57–70 (ASSTSKNSTGQRES) are enriched in polar residues. Residues 112-124 (ISPPRPPVKPLVA) show a composition bias toward pro residues. A compositionally biased stretch (polar residues) spans 145–155 (HSPSVKETPTE). A compositionally biased stretch (basic and acidic residues) spans 200 to 258 (DRPRGEKRERGESENAPSPERRVGLAKPEKPTLNRKPDGKSPKLAEPAREVRETVELKR). The segment covering 378–389 (TAKAAPPGTPTA) has biased composition (low complexity). Residues 406 to 419 (KSERQEPQEEKRPE) are compositionally biased toward basic and acidic residues. The 174-residue stretch at 502–675 (RRPPVVTIMG…LLVAEVEELV (174 aa)) folds into the tr-type G domain. The interval 511–518 (GHVDHGKT) is G1. 511-518 (GHVDHGKT) serves as a coordination point for GTP. Positions 536–540 (GITQH) are G2. A G3 region spans residues 561–564 (DTPG). Residues 561–565 (DTPGH) and 615–618 (NKVD) contribute to the GTP site. Residues 615-618 (NKVD) form a G4 region. The tract at residues 651-653 (SAL) is G5.

It belongs to the TRAFAC class translation factor GTPase superfamily. Classic translation factor GTPase family. IF-2 subfamily.

Its subcellular location is the cytoplasm. In terms of biological role, one of the essential components for the initiation of protein synthesis. Protects formylmethionyl-tRNA from spontaneous hydrolysis and promotes its binding to the 30S ribosomal subunits. Also involved in the hydrolysis of GTP during the formation of the 70S ribosomal complex. The chain is Translation initiation factor IF-2 from Microcystis aeruginosa (strain NIES-843 / IAM M-2473).